The chain runs to 1213 residues: DNA-directed RNA polymerase subunit beta' (1213 aa).

Cys-60, Cys-62, Cys-75, and Cys-78 together coordinate Zn(2+). Asp-450, Asp-452, and Asp-454 together coordinate Mg(2+). The Zn(2+) site is built by Cys-819, Cys-893, Cys-900, and Cys-903.

The protein belongs to the RNA polymerase beta' chain family. In terms of assembly, the RNAP catalytic core consists of 2 alpha, 1 beta, 1 beta' and 1 omega subunit. When a sigma factor is associated with the core the holoenzyme is formed, which can initiate transcription. Requires Mg(2+) as cofactor. The cofactor is Zn(2+).

The catalysed reaction is RNA(n) + a ribonucleoside 5'-triphosphate = RNA(n+1) + diphosphate. DNA-dependent RNA polymerase catalyzes the transcription of DNA into RNA using the four ribonucleoside triphosphates as substrates. The polypeptide is DNA-directed RNA polymerase subunit beta' (Streptococcus pyogenes serotype M28 (strain MGAS6180)).